A 334-amino-acid chain; its full sequence is Transposase for insertion sequence element IS1328 (334 aa).

This sequence belongs to the transposase IS1111A/IS1328/IS1533 family.

Its function is as follows. Required for the transposition of the insertion element. The chain is Transposase for insertion sequence element IS1328 from Yersinia enterocolitica.